A 335-amino-acid chain; its full sequence is Fimbrial adhesin PapGI (335 aa).

The N-terminal stretch at 1–21 is a signal peptide; sequence MKKWFPAFLFLSLSGGNDALA.

It belongs to the adhesin PapG family. As to quaternary structure, interacts with chaperone PapD. Assembly of the P pilus requires periplasmic chaperone PapD, in absence of the chaperone overexpression of this subunit is toxic, where the protein accumulates in the periplasm. PapD stimulates release of PapG from an inner membrane-associated form (where at least 1 disulfide bond can form) into the periplasm and also helps it achieve its correct digalactoside-binding conformation. Contains disulfide bonds.

The protein resides in the secreted. It localises to the fimbrium. Functionally, tip adhesin component of type P pili that binds preferentially to host cell glycosphingolipids such as globotriaosylceramide. This chain is Fimbrial adhesin PapGI, found in Escherichia coli.